Reading from the N-terminus, the 513-residue chain is Keratin, type II cuticular Hb2 (513 aa).

A head region spans residues 1–120; that stretch reads MSYHSFQPGS…PTVQRVKRDE (120 aa). Residues 120 to 431 enclose the IF rod domain; that stretch reads EKEQIKCLNN…RLLEGEEHRL (312 aa). The segment at 121–155 is coil 1A; the sequence is KEQIKCLNNRFASFINKVRFLEQKNKLLETKWNFM. Residues 156-165 form a linker 1 region; the sequence is QQQRCCQTNI. Positions 166-266 are coil 1B; it reads EPIFEGYISA…YEEEICLLQS (101 aa). Residues 267 to 283 form a linker 12 region; the sequence is QISETSVIVKMDNSREL. The interval 284–427 is coil 2; the sequence is DVDGIIAEIK…ATYRRLLEGE (144 aa). The tail stretch occupies residues 428–513; the sequence is EHRLCEGIGP…AGGSSPSHKH (86 aa).

This sequence belongs to the intermediate filament family. Heterotetramer of two type I and two type II keratins.

The sequence is that of Keratin, type II cuticular Hb2 (KRT82) from Homo sapiens (Human).